The chain runs to 129 residues: Small ribosomal subunit protein uS11 (129 aa).

Belongs to the universal ribosomal protein uS11 family. Part of the 30S ribosomal subunit. Interacts with proteins S7 and S18. Binds to IF-3.

Located on the platform of the 30S subunit, it bridges several disparate RNA helices of the 16S rRNA. Forms part of the Shine-Dalgarno cleft in the 70S ribosome. In Bacillus mycoides (strain KBAB4) (Bacillus weihenstephanensis), this protein is Small ribosomal subunit protein uS11.